We begin with the raw amino-acid sequence, 282 residues long: Bifunctional protein FolD (282 aa).

NADP(+) contacts are provided by residues 164 to 166 (GAS), Ile-189, and Ile-230.

Belongs to the tetrahydrofolate dehydrogenase/cyclohydrolase family. As to quaternary structure, homodimer.

The enzyme catalyses (6R)-5,10-methylene-5,6,7,8-tetrahydrofolate + NADP(+) = (6R)-5,10-methenyltetrahydrofolate + NADPH. It carries out the reaction (6R)-5,10-methenyltetrahydrofolate + H2O = (6R)-10-formyltetrahydrofolate + H(+). It functions in the pathway one-carbon metabolism; tetrahydrofolate interconversion. In terms of biological role, catalyzes the oxidation of 5,10-methylenetetrahydrofolate to 5,10-methenyltetrahydrofolate and then the hydrolysis of 5,10-methenyltetrahydrofolate to 10-formyltetrahydrofolate. In Campylobacter jejuni subsp. jejuni serotype O:2 (strain ATCC 700819 / NCTC 11168), this protein is Bifunctional protein FolD.